Consider the following 455-residue polypeptide: Exodeoxyribonuclease 7 large subunit (455 aa).

It belongs to the XseA family. Heterooligomer composed of large and small subunits.

Its subcellular location is the cytoplasm. It carries out the reaction Exonucleolytic cleavage in either 5'- to 3'- or 3'- to 5'-direction to yield nucleoside 5'-phosphates.. Functionally, bidirectionally degrades single-stranded DNA into large acid-insoluble oligonucleotides, which are then degraded further into small acid-soluble oligonucleotides. The protein is Exodeoxyribonuclease 7 large subunit of Oceanobacillus iheyensis (strain DSM 14371 / CIP 107618 / JCM 11309 / KCTC 3954 / HTE831).